The sequence spans 356 residues: Homoserine O-acetyltransferase (356 aa).

Positions 49-337 (VLICHALTGS…KSTHGHDAFL (289 aa)) constitute an AB hydrolase-1 domain. S143 functions as the Nucleophile in the catalytic mechanism. R212 contacts substrate. Active-site residues include D304 and H333. D334 provides a ligand contact to substrate.

The protein belongs to the AB hydrolase superfamily. MetX family. Homodimer.

It localises to the cytoplasm. It carries out the reaction L-homoserine + acetyl-CoA = O-acetyl-L-homoserine + CoA. It functions in the pathway amino-acid biosynthesis; L-methionine biosynthesis via de novo pathway; O-acetyl-L-homoserine from L-homoserine: step 1/1. In terms of biological role, transfers an acetyl group from acetyl-CoA to L-homoserine, forming acetyl-L-homoserine. This chain is Homoserine O-acetyltransferase, found in Nostoc punctiforme (strain ATCC 29133 / PCC 73102).